Consider the following 472-residue polypeptide: Siroheme synthase (472 aa).

The interval 1-203 (MNYLPIFIDI…GKIQEAKADL (203 aa)) is precorrin-2 dehydrogenase /sirohydrochlorin ferrochelatase. Residues 22 to 23 (DI) and 43 to 44 (KS) contribute to the NAD(+) site. At serine 128 the chain carries Phosphoserine. Positions 216–472 (GEVYLVGGGP…SSKKSYLFGG (257 aa)) are uroporphyrinogen-III C-methyltransferase. Proline 225 lines the S-adenosyl-L-methionine pocket. Catalysis depends on aspartate 248, which acts as the Proton acceptor. Residue lysine 270 is the Proton donor of the active site. Residues 301–303 (GGD), isoleucine 306, 331–332 (TA), methionine 383, and glycine 412 contribute to the S-adenosyl-L-methionine site.

It in the N-terminal section; belongs to the precorrin-2 dehydrogenase / sirohydrochlorin ferrochelatase family. The protein in the C-terminal section; belongs to the precorrin methyltransferase family.

It catalyses the reaction uroporphyrinogen III + 2 S-adenosyl-L-methionine = precorrin-2 + 2 S-adenosyl-L-homocysteine + H(+). The catalysed reaction is precorrin-2 + NAD(+) = sirohydrochlorin + NADH + 2 H(+). It carries out the reaction siroheme + 2 H(+) = sirohydrochlorin + Fe(2+). Its pathway is cofactor biosynthesis; adenosylcobalamin biosynthesis; precorrin-2 from uroporphyrinogen III: step 1/1. It functions in the pathway cofactor biosynthesis; adenosylcobalamin biosynthesis; sirohydrochlorin from precorrin-2: step 1/1. It participates in porphyrin-containing compound metabolism; siroheme biosynthesis; precorrin-2 from uroporphyrinogen III: step 1/1. The protein operates within porphyrin-containing compound metabolism; siroheme biosynthesis; siroheme from sirohydrochlorin: step 1/1. Its pathway is porphyrin-containing compound metabolism; siroheme biosynthesis; sirohydrochlorin from precorrin-2: step 1/1. Functionally, multifunctional enzyme that catalyzes the SAM-dependent methylations of uroporphyrinogen III at position C-2 and C-7 to form precorrin-2 via precorrin-1. Then it catalyzes the NAD-dependent ring dehydrogenation of precorrin-2 to yield sirohydrochlorin. Finally, it catalyzes the ferrochelation of sirohydrochlorin to yield siroheme. In Ruthia magnifica subsp. Calyptogena magnifica, this protein is Siroheme synthase.